Consider the following 498-residue polypeptide: Putrescine N-hydroxylase (498 aa).

FAD is bound by residues Phe23, Asp43, Lys45, Trp50, His51, and Gln62. Positions 62 and 104 each coordinate NADP(+). An FAD-binding site is contributed by Val127. Residues Ser207, Arg231, Tyr275, and Leu309 each contribute to the NADP(+) site. Residues Asn386, Pro397, and Leu399 each coordinate FAD. The segment covering 443-474 has biased composition (polar residues); it reads LESNTHSAVTPSKTRQGLNPSAKSVQQPSIEP. The interval 443–498 is disordered; that stretch reads LESNTHSAVTPSKTRQGLNPSAKSVQQPSIEPQTALRIAPTGGNVSALMAPNKEAQ.

Belongs to the lysine N(6)-hydroxylase/L-ornithine N(5)-oxygenase family. Requires FAD as cofactor.

It catalyses the reaction putrescine + NADPH + O2 = N-hydroxyputrescine + NADP(+) + H2O. It functions in the pathway siderophore biosynthesis. Its function is as follows. N-hydroxylating monooxygenase involved in the biosynthesis of the siderophore putrebactin. Catalyzes the N-hydroxylation of the aliphatic diamine putrescine into N-hydroxyputrescine (NHP). This chain is Putrescine N-hydroxylase, found in Shewanella oneidensis (strain ATCC 700550 / JCM 31522 / CIP 106686 / LMG 19005 / NCIMB 14063 / MR-1).